A 274-amino-acid polypeptide reads, in one-letter code: Protein STAY-GREEN, chloroplastic (274 aa).

Residues Met-1 to Arg-48 constitute a chloroplast transit peptide.

It belongs to the staygreen family.

It is found in the plastid. The protein resides in the chloroplast. In terms of biological role, involved in the disassembling mechanism of the intact light-harvesting complex of photosystem II (LHCPII) in the thylakoid membranes. Required to trigger chlorophyll degradation during natural and dark-induced leaf senescence. The sequence is that of Protein STAY-GREEN, chloroplastic (SGR) from Oryza sativa subsp. indica (Rice).